Consider the following 556-residue polypeptide: MNVMQENQIKLIEHIKQAVVQAVGLPEVEVPEILLEVPKDKKHGDYSTNIAMQLARVAKKAPRQIAESIVPELKKDNKLIKEVEIAGPGFINFYLDNAYLTELVPVILTEDHKYGESDFGKGEKFQIEFVSANPTGDLHLGHARGAAIGDSLANIMKMAGFDVSREYYINDAGNQINNLVLSAEARYFEALGLESEFPEDGYRGADIISLGKDLAAKYGDKYVNTSEEERRSVFRVDALAFETGKLRADLEEFRVSFDEWFSETSLYEENKVLPALERLRENGYIYEQDGATWLRTTDFEDDKDRVLIKSDGSYTYFLPDIAYHLNKLERGFDVLIDIWGADHHGYIPRMRAAIEALGYSPNQLEVEIIQLVHLFEDGVQVKMSKRTGKSVTMRDLIEEVGLDATRYFFAMRSSDTHMNFDMSLAKSTSNDNPVYYVQYAHARISSILRSGKEQGLEVTKDADMSLLQTEAEYDLLKVLGEFADVVAEAAAKRAPHRIVRYLNDLATAFHRFYNSNKVLDMDNLEVTQARLSLIKTAQITLRNGLTLLGVSAPEKM.

Residues 132-142 (ANPTGDLHLGH) carry the 'HIGH' region motif.

Belongs to the class-I aminoacyl-tRNA synthetase family. In terms of assembly, monomer.

The protein resides in the cytoplasm. It carries out the reaction tRNA(Arg) + L-arginine + ATP = L-arginyl-tRNA(Arg) + AMP + diphosphate. The protein is Arginine--tRNA ligase of Listeria welshimeri serovar 6b (strain ATCC 35897 / DSM 20650 / CCUG 15529 / CIP 8149 / NCTC 11857 / SLCC 5334 / V8).